The sequence spans 261 residues: 2,3-dihydro-2,3-dihydroxybenzoate dehydrogenase (261 aa).

12 to 36 (FITGAAQGIGEAVARTLASQGAHIA) contacts NAD(+). Ser144 is a substrate binding site. Tyr157 serves as the catalytic Proton acceptor.

Belongs to the short-chain dehydrogenases/reductases (SDR) family.

The protein resides in the cytoplasm. The enzyme catalyses (2S,3S)-2,3-dihydroxy-2,3-dihydrobenzoate + NAD(+) = 2,3-dihydroxybenzoate + NADH + H(+). Its pathway is siderophore biosynthesis; bacillibactin biosynthesis. This Bacillus subtilis (strain 168) protein is 2,3-dihydro-2,3-dihydroxybenzoate dehydrogenase (dhbA).